The following is a 182-amino-acid chain: Ribosomal RNA small subunit methyltransferase G (182 aa).

S-adenosyl-L-methionine-binding positions include glycine 58, phenylalanine 63, 109–110, and arginine 123; that span reads IE.

Belongs to the methyltransferase superfamily. RNA methyltransferase RsmG family.

The protein resides in the cytoplasm. The enzyme catalyses guanosine(527) in 16S rRNA + S-adenosyl-L-methionine = N(7)-methylguanosine(527) in 16S rRNA + S-adenosyl-L-homocysteine. In terms of biological role, specifically methylates the N7 position of guanine in position 527 of 16S rRNA. In Campylobacter fetus subsp. fetus (strain 82-40), this protein is Ribosomal RNA small subunit methyltransferase G.